The sequence spans 229 residues: Aquaporin Z (229 aa).

Helical transmembrane passes span 8 to 28 and 33 to 53; these read FLGT…AAGF and IGFA…AYAI. The short motif at 62–64 is the NPA 1 element; sequence NPA. A run of 3 helical transmembrane segments spans residues 88–108, 129–149, and 158–178; these read VLGA…GAGF, LLAA…VIMG, and GFAP…SIPV. Residues 184–186 carry the NPA 2 motif; it reads NPA. A helical membrane pass occupies residues 192–212; it reads ALFVGGWAVQQLWLFWLAPII.

This sequence belongs to the MIP/aquaporin (TC 1.A.8) family. As to quaternary structure, homotetramer.

The protein resides in the cell inner membrane. It carries out the reaction H2O(in) = H2O(out). Its function is as follows. Channel that permits osmotically driven movement of water in both directions. It is involved in the osmoregulation and in the maintenance of cell turgor during volume expansion in rapidly growing cells. It mediates rapid entry or exit of water in response to abrupt changes in osmolarity. This Chromobacterium violaceum (strain ATCC 12472 / DSM 30191 / JCM 1249 / CCUG 213 / NBRC 12614 / NCIMB 9131 / NCTC 9757 / MK) protein is Aquaporin Z.